The following is an 804-amino-acid chain: ABC transporter aclQ (804 aa).

The next 9 helical transmembrane spans lie at 3–23 (LAVLTLALCWAYPVTIYISYL), 52–72 (FTAIFWLQLVQCFDLAISITI), 97–117 (IAVFMFLAAGLLPDPDVPFSP), 119–139 (LSHSHAWIAGIIMEALQLAMF), 155–175 (LQLGLVMVRLVLFVAMVALYF), 206–226 (HGGWLDYVVGFSTLFPFLWPS), 239–259 (FVLLVIQRVVNILVPHQLGIV), 349–369 (LVFQLFPMVADLWIAALYFLI), and 373–393 (AFYSLIVITVTWLYLFVTIYM). The ABC transmembrane type-1 domain maps to 236–518 (IFCFVLLVIQ…FGSFYTQVQN (283 aa)). Asparagine 460 is a glycosylation site (N-linked (GlcNAc...) asparagine). Transmembrane regions (helical) follow at residues 464 to 484 (NLLFTAGVAIVCLLCAYQISA) and 489 to 509 (VAMFVTLLTYLAQLQAPLNFF). One can recognise an ABC transporter domain in the interval 552–786 (VEFTHVNFAY…NGMYSQMWAK (235 aa)). 585–592 (GESGSGKS) serves as a coordination point for ATP. Residues asparagine 639 and asparagine 797 are each glycosylated (N-linked (GlcNAc...) asparagine).

It belongs to the ABC transporter superfamily. ABCB family. Heavy Metal importer (TC 3.A.1.210) subfamily.

It is found in the membrane. Functionally, ABC transporter; part of the gene cluster that mediates the biosynthesis of aspirochlorine (or antibiotic A30641), an unusual halogenated spiro compound with distinctive antifungal properties due to selective inhibition of protein biosynthesis, and which is also active against bacteria, viruses, and murine tumor cells. In Aspergillus oryzae (strain ATCC 42149 / RIB 40) (Yellow koji mold), this protein is ABC transporter aclQ.